The chain runs to 62 residues: Photosystem II reaction center protein Z (62 aa).

Transmembrane regions (helical) follow at residues 8–28 (AVFA…VVFA) and 41–61 (FSGT…NSLI).

Belongs to the PsbZ family. As to quaternary structure, PSII is composed of 1 copy each of membrane proteins PsbA, PsbB, PsbC, PsbD, PsbE, PsbF, PsbH, PsbI, PsbJ, PsbK, PsbL, PsbM, PsbT, PsbY, PsbZ, Psb30/Ycf12, at least 3 peripheral proteins of the oxygen-evolving complex and a large number of cofactors. It forms dimeric complexes.

Its subcellular location is the plastid. It is found in the chloroplast thylakoid membrane. Functionally, may control the interaction of photosystem II (PSII) cores with the light-harvesting antenna, regulates electron flow through the 2 photosystem reaction centers. PSII is a light-driven water plastoquinone oxidoreductase, using light energy to abstract electrons from H(2)O, generating a proton gradient subsequently used for ATP formation. This Lotus japonicus (Lotus corniculatus var. japonicus) protein is Photosystem II reaction center protein Z.